A 149-amino-acid polypeptide reads, in one-letter code: Large ribosomal subunit protein uL15 (149 aa).

Basic residues-rich tracts occupy residues 1 to 13 (MPTR…KHRG) and 21 to 42 (RIGK…HHHR). A disordered region spans residues 1 to 44 (MPTRLTKTRKHRGNVSAGKGRIGKHRKHPGGRGKAGGQHHHRTN).

The protein belongs to the universal ribosomal protein uL15 family. Component of the large ribosomal subunit. Mature ribosomes consist of a small (40S) and a large (60S) subunit. The 40S subunit contains about 32 different proteins and 1 molecule of RNA (18S). The 60S subunit contains 45 different proteins and 3 molecules of RNA (25S, 5.8S and 5S).

Its subcellular location is the cytoplasm. Functionally, component of the ribosome, a large ribonucleoprotein complex responsible for the synthesis of proteins in the cell. The small ribosomal subunit (SSU) binds messenger RNAs (mRNAs) and translates the encoded message by selecting cognate aminoacyl-transfer RNA (tRNA) molecules. The large subunit (LSU) contains the ribosomal catalytic site termed the peptidyl transferase center (PTC), which catalyzes the formation of peptide bonds, thereby polymerizing the amino acids delivered by tRNAs into a polypeptide chain. The nascent polypeptides leave the ribosome through a tunnel in the LSU and interact with protein factors that function in enzymatic processing, targeting, and the membrane insertion of nascent chains at the exit of the ribosomal tunnel. The polypeptide is Large ribosomal subunit protein uL15 (Candida albicans (strain SC5314 / ATCC MYA-2876) (Yeast)).